The following is a 149-amino-acid chain: 17 kDa major membrane protein (149 aa).

The first 19 residues, 1–19 (MKKIIKLSLLSLSIAGLAS), serve as a signal peptide directing secretion. A lipid anchor (N-palmitoyl cysteine) is attached at cysteine 20. Cysteine 20 carries the S-diacylglycerol cysteine lipid modification.

It localises to the cell outer membrane. This Francisella tularensis subsp. holarctica (strain LVS) protein is 17 kDa major membrane protein.